The primary structure comprises 330 residues: Ketol-acid reductoisomerase (NADP(+)) (330 aa).

Residues Met-1–Thr-181 form the KARI N-terminal Rossmann domain. NADP(+)-binding positions include Tyr-24–Gln-27, Arg-47, Ser-50, Ser-52, and Asp-82–Gln-85. Residue His-107 is part of the active site. Residue Gly-133 coordinates NADP(+). In terms of domain architecture, KARI C-terminal knotted spans Asn-182–Leu-327. Positions 190, 194, 226, and 230 each coordinate Mg(2+). Ser-251 lines the substrate pocket.

It belongs to the ketol-acid reductoisomerase family. The cofactor is Mg(2+).

The catalysed reaction is (2R)-2,3-dihydroxy-3-methylbutanoate + NADP(+) = (2S)-2-acetolactate + NADPH + H(+). It carries out the reaction (2R,3R)-2,3-dihydroxy-3-methylpentanoate + NADP(+) = (S)-2-ethyl-2-hydroxy-3-oxobutanoate + NADPH + H(+). It functions in the pathway amino-acid biosynthesis; L-isoleucine biosynthesis; L-isoleucine from 2-oxobutanoate: step 2/4. It participates in amino-acid biosynthesis; L-valine biosynthesis; L-valine from pyruvate: step 2/4. In terms of biological role, involved in the biosynthesis of branched-chain amino acids (BCAA). Catalyzes an alkyl-migration followed by a ketol-acid reduction of (S)-2-acetolactate (S2AL) to yield (R)-2,3-dihydroxy-isovalerate. In the isomerase reaction, S2AL is rearranged via a Mg-dependent methyl migration to produce 3-hydroxy-3-methyl-2-ketobutyrate (HMKB). In the reductase reaction, this 2-ketoacid undergoes a metal-dependent reduction by NADPH to yield (R)-2,3-dihydroxy-isovalerate. The sequence is that of Ketol-acid reductoisomerase (NADP(+)) from Chlorobium luteolum (strain DSM 273 / BCRC 81028 / 2530) (Pelodictyon luteolum).